Here is a 113-residue protein sequence, read N- to C-terminus: Retrotransposon Gag-like protein 8B (113 aa).

The protein belongs to the FAM127 family.

The chain is Retrotransposon Gag-like protein 8B (RTL8B) from Homo sapiens (Human).